A 337-amino-acid polypeptide reads, in one-letter code: 4-hydroxyproline 2-epimerase (337 aa).

The Proton acceptor role is filled by Cys-91. Residues 92 to 93 (GH), Asp-252, and 257 to 258 (GT) each bind substrate.

It belongs to the proline racemase family.

The enzyme catalyses trans-4-hydroxy-L-proline = cis-4-hydroxy-D-proline. Catalyzes the epimerization of trans-4-hydroxy-L-proline (t4LHyp) to cis-4-hydroxy-D-proline (c4DHyp). Is involved in a degradation pathway that converts t4LHyp to alpha-ketoglutarate, which allows R.sphaeroides to grow on t4LHyp as a sole carbon source. Displays no proline racemase activity. The protein is 4-hydroxyproline 2-epimerase of Cereibacter sphaeroides (strain ATCC 17023 / DSM 158 / JCM 6121 / CCUG 31486 / LMG 2827 / NBRC 12203 / NCIMB 8253 / ATH 2.4.1.) (Rhodobacter sphaeroides).